A 151-amino-acid chain; its full sequence is Deoxyuridine 5'-triphosphate nucleotidohydrolase (151 aa).

Substrate is bound by residues 70 to 72, N83, 87 to 89, and M97; these read RSG and LID.

It belongs to the dUTPase family. In terms of assembly, homotrimer. It depends on Mg(2+) as a cofactor.

It catalyses the reaction dUTP + H2O = dUMP + diphosphate + H(+). It functions in the pathway pyrimidine metabolism; dUMP biosynthesis; dUMP from dCTP (dUTP route): step 2/2. In terms of biological role, this enzyme is involved in nucleotide metabolism: it produces dUMP, the immediate precursor of thymidine nucleotides and it decreases the intracellular concentration of dUTP so that uracil cannot be incorporated into DNA. In Escherichia coli (strain K12 / MC4100 / BW2952), this protein is Deoxyuridine 5'-triphosphate nucleotidohydrolase.